Consider the following 310-residue polypeptide: UDP-N-acetylenolpyruvoylglucosamine reductase (310 aa).

One can recognise an FAD-binding PCMH-type domain in the interval 31–216; it reads KIGGPADYFV…LRKIEELNQA (186 aa). Residue Arg-180 is part of the active site. Residue Ser-230 is the Proton donor of the active site. The active site involves Glu-300.

Belongs to the MurB family. FAD is required as a cofactor.

It localises to the cytoplasm. The catalysed reaction is UDP-N-acetyl-alpha-D-muramate + NADP(+) = UDP-N-acetyl-3-O-(1-carboxyvinyl)-alpha-D-glucosamine + NADPH + H(+). Its pathway is cell wall biogenesis; peptidoglycan biosynthesis. Cell wall formation. This is UDP-N-acetylenolpyruvoylglucosamine reductase from Lachnoclostridium phytofermentans (strain ATCC 700394 / DSM 18823 / ISDg) (Clostridium phytofermentans).